Reading from the N-terminus, the 293-residue chain is 4-diphosphocytidyl-2-C-methyl-D-erythritol kinase (293 aa).

K16 is an active-site residue. 99–109 contributes to the ATP binding site; it reads PMGAGLGGGSS. D141 is an active-site residue.

Belongs to the GHMP kinase family. IspE subfamily.

It carries out the reaction 4-CDP-2-C-methyl-D-erythritol + ATP = 4-CDP-2-C-methyl-D-erythritol 2-phosphate + ADP + H(+). It participates in isoprenoid biosynthesis; isopentenyl diphosphate biosynthesis via DXP pathway; isopentenyl diphosphate from 1-deoxy-D-xylulose 5-phosphate: step 3/6. Its function is as follows. Catalyzes the phosphorylation of the position 2 hydroxy group of 4-diphosphocytidyl-2C-methyl-D-erythritol. The polypeptide is 4-diphosphocytidyl-2-C-methyl-D-erythritol kinase (Paraburkholderia phymatum (strain DSM 17167 / CIP 108236 / LMG 21445 / STM815) (Burkholderia phymatum)).